A 395-amino-acid polypeptide reads, in one-letter code: Putative nickel insertion protein (395 aa).

It belongs to the LarC family.

This Archaeoglobus fulgidus (strain ATCC 49558 / DSM 4304 / JCM 9628 / NBRC 100126 / VC-16) protein is Putative nickel insertion protein.